A 441-amino-acid chain; its full sequence is Tubulin beta-1 chain (441 aa).

GTP-binding residues include Gln11, Glu69, Ser138, Gly142, Thr143, Gly144, Asn204, and Asn226. Glu69 contacts Mg(2+).

It belongs to the tubulin family. Dimer of alpha and beta chains. A typical microtubule is a hollow water-filled tube with an outer diameter of 25 nm and an inner diameter of 15 nM. Alpha-beta heterodimers associate head-to-tail to form protofilaments running lengthwise along the microtubule wall with the beta-tubulin subunit facing the microtubule plus end conferring a structural polarity. Microtubules usually have 13 protofilaments but different protofilament numbers can be found in some organisms and specialized cells. Mg(2+) serves as cofactor. In terms of tissue distribution, expressed primarily in touch receptor neurons.

The protein localises to the cytoplasm. Its subcellular location is the cytoskeleton. Functionally, tubulin is the major constituent of microtubules, a cylinder consisting of laterally associated linear protofilaments composed of alpha- and beta-tubulin heterodimers. Microtubules grow by the addition of GTP-tubulin dimers to the microtubule end, where a stabilizing cap forms. Below the cap, tubulin dimers are in GDP-bound state, owing to GTPase activity of alpha-tubulin. Plays a role in mechanosensory transduction (touch sensitivity). Mec-7 beta-tubulin is required for the production of 15-protofilament microtubules. The sequence is that of Tubulin beta-1 chain (mec-7) from Caenorhabditis briggsae.